The following is a 921-amino-acid chain: Protein translocase subunit SecA (921 aa).

Residues Gln87, 105–109, and Asp501 each bind ATP; that span reads GEGKT. The interval 831 to 886 is disordered; the sequence is PFPVINTETSGPSEEPAGLFSQGTTGGDIPAPQPMAGFPSAAPMPPRPQPVPTGAE. Pro residues predominate over residues 872 to 881; the sequence is APMPPRPQPV. 4 residues coordinate Zn(2+): Cys905, Cys907, Cys916, and His917.

This sequence belongs to the SecA family. In terms of assembly, monomer and homodimer. Part of the essential Sec protein translocation apparatus which comprises SecA, SecYEG and auxiliary proteins SecDF-YajC and YidC. Zn(2+) is required as a cofactor.

Its subcellular location is the cell inner membrane. The protein resides in the cytoplasm. It carries out the reaction ATP + H2O + cellular proteinSide 1 = ADP + phosphate + cellular proteinSide 2.. In terms of biological role, part of the Sec protein translocase complex. Interacts with the SecYEG preprotein conducting channel. Has a central role in coupling the hydrolysis of ATP to the transfer of proteins into and across the cell membrane, serving both as a receptor for the preprotein-SecB complex and as an ATP-driven molecular motor driving the stepwise translocation of polypeptide chains across the membrane. This is Protein translocase subunit SecA from Gluconobacter oxydans (strain 621H) (Gluconobacter suboxydans).